We begin with the raw amino-acid sequence, 519 residues long: Sorting nexin-2 (519 aa).

Residues 1–104 (MAAEREPPPL…EPSPAVTPVT (104 aa)) form a disordered region. Composition is skewed to low complexity over residues 27–50 (LFTS…LPAE) and 93–104 (SSEPSPAVTPVT). Position 97 is a phosphoserine (S97). Phosphothreonine is present on residues T101 and T104. 2 positions are modified to phosphoserine: S117 and S119. The PX domain occupies 140-269 (FDIEIGVSDP…QFLESSELPR (130 aa)). Positions 183, 185, 211, and 235 each coordinate a 1,2-diacyl-sn-glycero-3-phospho-(1D-myo-inositol-3-phosphate). At S185 the chain carries Phosphoserine. An interaction with RhoG region spans residues 260–519 (QFLESSELPR…AFLPEAKAIA (260 aa)). S277 carries the phosphoserine modification. The interval 278-295 (GAGILRMVNKAADAVNKM) is membrane-binding amphipathic helix. The 221-residue stretch at 299-519 (MNESDAWFEE…AFLPEAKAIA (221 aa)) folds into the BAR domain. K469 carries the N6-acetyllysine modification.

The protein belongs to the sorting nexin family. Predominantly forms heterodimers with BAR domain-containing sorting nexins SNX5, SNX6 and SNX32; can self-associate to form homodimers. The heterodimers are proposed to self-assemble into helical arrays on the membrane to stabilize and expand local membrane curvature underlying endosomal tubule formation. Thought to be a component of the originally described retromer complex (also called SNX-BAR retromer) which is a pentamer containing the heterotrimeric retromer cargo-selective complex (CSC), also described as vacuolar protein sorting subcomplex (VPS), and a heterodimeric membrane-deforming subcomplex formed between SNX1 or SNX2 and SNX5 or SNX6 (also called SNX-BAR subcomplex); the respective CSC and SNX-BAR subcomplexes associate with low affinity. Interacts with SNX5, SNX6, SNX32, VPS26A, VPS29, VPS35, FNBP1, KALRN, RHOG (GDP-bound form).

The protein localises to the early endosome membrane. Its subcellular location is the cell projection. It is found in the lamellipodium. Its function is as follows. Involved in several stages of intracellular trafficking. Interacts with membranes containing phosphatidylinositol 3-phosphate (PtdIns(3P)) or phosphatidylinositol 3,5-bisphosphate (PtdIns(3,5)P2). Acts in part as component of the retromer membrane-deforming SNX-BAR subcomplex. The SNX-BAR retromer mediates retrograde transport of cargo proteins from endosomes to the trans-Golgi network (TGN) and is involved in endosome-to-plasma membrane transport for cargo protein recycling. The SNX-BAR subcomplex functions to deform the donor membrane into a tubular profile called endosome-to-TGN transport carrier (ETC). Can sense membrane curvature and has in vitro vesicle-to-membrane remodeling activity. Required for retrograde endosome-to-TGN transport of TGN38. Promotes KALRN- and RHOG-dependent but retromer-independent membrane remodeling such as lamellipodium formation; the function is dependent on GEF activity of KALRN. The chain is Sorting nexin-2 (SNX2) from Homo sapiens (Human).